We begin with the raw amino-acid sequence, 143 residues long: Putative pre-16S rRNA nuclease (143 aa).

This sequence belongs to the YqgF nuclease family.

The protein localises to the cytoplasm. Its function is as follows. Could be a nuclease involved in processing of the 5'-end of pre-16S rRNA. The polypeptide is Putative pre-16S rRNA nuclease (Marinobacter nauticus (strain ATCC 700491 / DSM 11845 / VT8) (Marinobacter aquaeolei)).